Consider the following 216-residue polypeptide: Chaperone protein TorD (216 aa).

This sequence belongs to the TorD/DmsD family. TorD subfamily.

The protein localises to the cytoplasm. In terms of biological role, involved in the biogenesis of TorA. Acts on TorA before the insertion of the molybdenum cofactor and, as a result, probably favors a conformation of the apoenzyme that is competent for acquiring the cofactor. This chain is Chaperone protein TorD, found in Photobacterium profundum (strain SS9).